A 43-amino-acid chain; its full sequence is Protein PsbN (43 aa).

A helical membrane pass occupies residues 7 to 27 (IAIFISGLLVSFTGYALYTAF).

Belongs to the PsbN family.

The protein resides in the plastid. It localises to the chloroplast thylakoid membrane. In terms of biological role, may play a role in photosystem I and II biogenesis. This Suaeda maritima (Annual sea blite) protein is Protein PsbN.